The primary structure comprises 336 residues: Potassium channel subfamily K member 1 (336 aa).

Topologically, residues 1–20 are cytoplasmic; sequence MLQSLAGSSCVRLVERHRSA. A helical transmembrane segment spans residues 21 to 41; the sequence is WCFGFLVLGYLLYLVFGAVVF. Residues 42-103 lie on the Extracellular side of the membrane; the sequence is SSVELPYEDL…SNASGNWNWD (62 aa). The N-linked (GlcNAc...) asparagine glycan is linked to asparagine 95. An intramembrane region (helical) is located at residues 104 to 116; it reads FTSALFFASTVLS. Residues 117-122 lie within the membrane without spanning it; sequence TTGYGH. The selectivity filter 1 stretch occupies residues 117-122; it reads TTGYGH. Residues 123–132 lie on the Extracellular side of the membrane; it reads TVPLSDGGKA. Residues 133–156 form a helical membrane-spanning segment; sequence FCIIYSVIGIPFTLLFLTAVVQRV. Over 157–181 the chain is Cytoplasmic; sequence TVHVTRRPVLYFHIRWGFSKQVVAI. The chain crosses the membrane as a helical span at residues 182 to 202; the sequence is VHAVLLGFVTVSCFFFIPAAV. Residues 203 to 211 lie on the Extracellular side of the membrane; it reads FSVLEDDWN. An intramembrane region (helical) is located at residues 212-224; the sequence is FLESFYFCFISLS. The segment at 225–230 is selectivity filter 2; the sequence is TIGLGD. An intramembrane segment occupies 225–231; the sequence is TIGLGDY. Over 232 to 243 the chain is Extracellular; the sequence is VPGEGYNQKFRE. The chain crosses the membrane as a helical span at residues 244 to 267; sequence LYKIGITCYLLLGLIAMLVVLETF. At 268–336 the chain is on the cytoplasmic side; sequence CELHELKKFR…PPYEDGSADH (69 aa). Lysine 274 participates in a covalent cross-link: Glycyl lysine isopeptide (Lys-Gly) (interchain with G-Cter in SUMO). Positions 293 to 299 are important for intracellular retention in recycling endosomes; that stretch reads IMEHDQL. The segment at 310-336 is disordered; that stretch reads GLKEEQKQSEPFVASQSPPYEDGSADH. Serine 326 carries the phosphoserine modification.

Belongs to the two pore domain potassium channel (TC 1.A.1.8) family. Homodimer; disulfide-linked. Heterodimer with KCNK2; disulfide-linked. In astrocytes, forms mostly heterodimeric potassium channels with KCNK2, with only a minor proportion of functional channels containing homodimeric KCNK1. Interacts with KCNK3 and KCNK9, forming functional heterodimeric channels. Interacts with GNG4. Identified in a complex with PSD and ARF6; interacts only with PSD that is bound to ARF6. Interacts with UBE2I. Post-translationally, sumoylation is controversial. Sumoylated by UBE2I. Not sumoylated when expressed in xenopus oocytes or mammalian cells. Sumoylation inactivates the channel, but does not interfere with expression at the cell membrane. Sumoylation of a single subunit is sufficient to silence the dimeric channel. Sumoylation of KCNK1 is sufficient to silence heterodimeric channels formed by KCNK1 and KCNK3 or KCNK9. Desumoylated by SENP1; this activates the channel. Desumoylated by SENP1; this strongly increases halothane-mediated activation of heterodimeric channels formed with KCNK9. SENP1 treatment has no effect. Detected in spiral ganglion neurons. Detected in hippocampus CA1 and CA1 regions and in the molecular layer of the dentate gyrus. Detected on hippocampus astrocytes. Highly expressed in the stria vascularis in the cochlea. Detected in pancreas islet beta cells. Detected in kidney, at brush border membranes in proximal tubules and in cytoplasmic structures in distal convoluted tubules, thick ascending limbs and collecting ducts (at protein level). Widely expressed. Detected in spiral ganglion cells. Highest expression in brain, kidney, thyroid, salivary gland, adrenal gland, prostate, epididymis, uterus, placenta, colon and jejunum. Moderate expression in eyes, pituitary, pancreas, smooth muscle, testis and ovary. Very low levels in lung, aorta, liver, heart, skeletal muscle, thymus and spleen. In the brain, highest expression in cerebellar granule cells, brainstem, hippocampus and cerebral cortex.

The protein resides in the cell membrane. It is found in the recycling endosome. Its subcellular location is the apical cell membrane. The protein localises to the cytoplasmic vesicle. It localises to the perikaryon. The protein resides in the cell projection. It is found in the dendrite. Its subcellular location is the synaptic cell membrane. The enzyme catalyses K(+)(in) = K(+)(out). It carries out the reaction NH4(+)(in) = NH4(+)(out). The catalysed reaction is Na(+)(in) = Na(+)(out). It catalyses the reaction Rb(+)(in) = Rb(+)(out). The enzyme catalyses Cs(+)(in) = Cs(+)(out). It carries out the reaction Li(+)(in) = Li(+)(out). The catalysed reaction is L-glutamate(out) = L-glutamate(in). It catalyses the reaction chloride(in) = chloride(out). With respect to regulation, inhibited by quinine, quinidine, barium, and internal acidification. In terms of biological role, ion channel that contributes to passive transmembrane potassium transport and to the regulation of the resting membrane potential in brain astrocytes, but also in kidney and in other tissues. Forms dimeric channels through which potassium ions pass in accordance with their electrochemical gradient. The channel is selective for K(+) ions at physiological potassium concentrations and at neutral pH, but becomes permeable to Na(+) at subphysiological K(+) levels and upon acidification of the extracellular medium. The homodimer has very low potassium channel activity, when expressed in heterologous systems, and can function as weakly inward rectifying potassium channel. Channel activity is modulated by activation of serotonin receptors. Heterodimeric channels containing KCNK1 and KCNK2 have much higher activity, and may represent the predominant form in astrocytes. Heterodimeric channels containing KCNK1 and KCNK3 or KCNK9 have much higher activity. Heterodimeric channels formed by KCNK1 and KCNK9 may contribute to halothane-sensitive currents. Mediates outward rectifying potassium currents in dentate gyrus granule cells and contributes to the regulation of their resting membrane potential. Contributes to the regulation of action potential firing in dentate gyrus granule cells and down-regulates their intrinsic excitability. In astrocytes, the heterodimer formed by KCNK1 and KCNK2 is required for rapid glutamate release in response to activation of G-protein coupled receptors, such as F2R and CNR1. Required for normal ion and water transport in the kidney. Contributes to the regulation of the resting membrane potential of pancreatic beta cells. The low channel activity of homodimeric KCNK1 may be due to sumoylation. The low channel activity may be due to rapid internalization from the cell membrane and retention in recycling endosomes. Permeable to monovalent cations with ion selectivity for K(+) &gt; Rb(+) &gt;&gt; NH4(+) &gt;&gt; Cs(+) = Na(+) = Li(+). The sequence is that of Potassium channel subfamily K member 1 (Kcnk1) from Mus musculus (Mouse).